Here is a 205-residue protein sequence, read N- to C-terminus: MKTLCVLSIFLALLGGLCTSSTTSTTATSNGTTSTLNTTVSSVASTSTPSTESTTTTTPTTTNSSASSTSVTVASTATTSPQTNSTTSLTSPLSSTFSSTSANVSSSTTTTTSSTTKSTSSTKPKTSKNNPKTQEAGAEAAVMISLGILYLFILLLIIFVIILICFIRRRQHHQHGGGGGGQGGPMIPLDVISLESGLGESWSSE.

A signal peptide spans 1–19; that stretch reads MKTLCVLSIFLALLGGLCT. Positions 40–133 are enriched in low complexity; the sequence is VSSVASTSTP…PKTSKNNPKT (94 aa). A disordered region spans residues 40 to 135; sequence VSSVASTSTP…TSKNNPKTQE (96 aa). Residues 147-167 traverse the membrane as a helical segment; the sequence is GILYLFILLLIIFVIILICFI.

The protein resides in the host membrane. This is an uncharacterized protein from Equine herpesvirus 2 (strain 86/87) (EHV-2).